A 404-amino-acid polypeptide reads, in one-letter code: Chorismate synthase (404 aa).

NADP(+) is bound by residues Arg-43 and Arg-49. Residues 138-140, 259-260, Gly-303, 318-322, and Arg-344 contribute to the FMN site; these read RAS, QA, and KPIST.

This sequence belongs to the chorismate synthase family. In terms of assembly, homotetramer. It depends on FMNH2 as a cofactor.

The enzyme catalyses 5-O-(1-carboxyvinyl)-3-phosphoshikimate = chorismate + phosphate. It participates in metabolic intermediate biosynthesis; chorismate biosynthesis; chorismate from D-erythrose 4-phosphate and phosphoenolpyruvate: step 7/7. Catalyzes the anti-1,4-elimination of the C-3 phosphate and the C-6 proR hydrogen from 5-enolpyruvylshikimate-3-phosphate (EPSP) to yield chorismate, which is the branch point compound that serves as the starting substrate for the three terminal pathways of aromatic amino acid biosynthesis. This reaction introduces a second double bond into the aromatic ring system. The chain is Chorismate synthase from Mycolicibacterium paratuberculosis (strain ATCC BAA-968 / K-10) (Mycobacterium paratuberculosis).